A 294-amino-acid polypeptide reads, in one-letter code: Elongation factor Ts (294 aa).

The tract at residues Thr-82–Val-85 is involved in Mg(2+) ion dislocation from EF-Tu.

The protein belongs to the EF-Ts family.

The protein localises to the cytoplasm. Functionally, associates with the EF-Tu.GDP complex and induces the exchange of GDP to GTP. It remains bound to the aminoacyl-tRNA.EF-Tu.GTP complex up to the GTP hydrolysis stage on the ribosome. This chain is Elongation factor Ts, found in Psychrobacter arcticus (strain DSM 17307 / VKM B-2377 / 273-4).